The sequence spans 163 residues: Large ribosomal subunit protein uL15 (163 aa).

The protein belongs to the universal ribosomal protein uL15 family. As to quaternary structure, part of the 50S ribosomal subunit.

In terms of biological role, binds to the 23S rRNA. This Orientia tsutsugamushi (strain Ikeda) (Rickettsia tsutsugamushi) protein is Large ribosomal subunit protein uL15.